A 525-amino-acid polypeptide reads, in one-letter code: GMP synthase [glutamine-hydrolyzing] (525 aa).

A Glutamine amidotransferase type-1 domain is found at 8-207 (KILILDFGSQ…ALDICGCAAN (200 aa)). C85 (nucleophile) is an active-site residue. Catalysis depends on residues H181 and E183. Residues 208-400 (WKPSSIIEDA…LGLPYNMLYR (193 aa)) enclose the GMPS ATP-PPase domain. Position 235 to 241 (235 to 241 (SGGVDSS)) interacts with ATP.

Homodimer.

It catalyses the reaction XMP + L-glutamine + ATP + H2O = GMP + L-glutamate + AMP + diphosphate + 2 H(+). It functions in the pathway purine metabolism; GMP biosynthesis; GMP from XMP (L-Gln route): step 1/1. Its function is as follows. Catalyzes the synthesis of GMP from XMP. This Shewanella baltica (strain OS223) protein is GMP synthase [glutamine-hydrolyzing].